We begin with the raw amino-acid sequence, 65 residues long: Cell death protein rpr (65 aa).

Interacts with Diap2 (via BIR2 domain).

In terms of biological role, activator of apoptosis, as well as grim and hid, that acts on the effector Dredd. This Drosophila melanogaster (Fruit fly) protein is Cell death protein rpr (rpr).